Reading from the N-terminus, the 521-residue chain is GMC-type oxidoreductase acuG (521 aa).

FAD-binding positions include 14 to 15, 34 to 35, L82, 90 to 93, A492, and 503 to 504; these read TV, EA, NYGL, and YQ.

This sequence belongs to the GMC oxidoreductase family. FAD is required as a cofactor.

The protein operates within secondary metabolite biosynthesis. GMC-type oxidoreductase; part of the gene cluster that mediates the biosynthesis of aculins. The pathway begins with the synthesis of 6-methylsalicylic acid by the polyketide synthase (PKS) acuA via condensation of acetate and malonate units. The 6-methylsalicylic acid decarboxylase acuB then catalyzes the decarboxylation of 6-methylsalicylic acid to yield m-cresol (also known as 3-methylphenol). These first reactions occur in the cytosol. The intermediate m-cresol is then transported into the endoplasmic reticulum where the cytochrome P450 monooxygenase acuC converts it to m-hydroxybenzyl alcohol, which is further converted to gentisyl alcohol by the cytochrome P450 monooxygenase acuD. Gentisyl alcohol is further oxidized by the oxidoreductase acuE that probably catalyzes hydroxylation of the aromatic ring. The aromatic system might then be opened by oxidation through a Baeyer-Villiger type of oxidation, which could be catalyzed by acuF, with the carboxylic acid at C-1 subsequently reduced to an aldehyde by acuG. Subsequently, a hemiacetal is formed, before the dehydrogenase acuH would reduce the double bond between C-4 and C-6. Finally, keto-enol tautomerism results in formation of aculinic acid, which exists as two diastereomers (both R/S configurations at C-1) by non-enzymatic hemiacetal formation. The carboxypeptidase acuI could be involved in the linking of aculinic acid to an aculene A moiety produced by the aculene biosynthesis cluster and which leads to the production of aculin A. AcuI may also be involved in the attachment of proline to aculinic acid to form epi-aculins A and B. The protein is GMC-type oxidoreductase acuG of Aspergillus aculeatus (strain ATCC 16872 / CBS 172.66 / WB 5094).